A 350-amino-acid polypeptide reads, in one-letter code: Ion-translocating oxidoreductase complex subunit D (350 aa).

4 consecutive transmembrane segments (helical) span residues 36-56 (FYFFGWGVLVQVMLAITIALL), 68-88 (PIISTLSDNSAVLTALLIGVS), 89-109 (IPSIAPWWVVVVGTIFAIVIV), and 120-140 (IFNPAMAAYVMLLISFPVQMT). FMN phosphoryl threonine is present on T185. The next 5 membrane-spanning stretches (helical) occupy residues 212 to 232 (GFGVGWFWVNVAYLVGGLAML), 239 to 259 (WQISVGILAALFVCSSFGYLL), 265 to 285 (IGPLFQLFSGATMLAVFFIAT), 291 to 311 (ATSVRGRLLFGGLIGVLVYVI), and 315 to 335 (GGYPDAFAFAILLANLCAPFI).

This sequence belongs to the NqrB/RnfD family. The complex is composed of six subunits: RnfA, RnfB, RnfC, RnfD, RnfE and RnfG. Requires FMN as cofactor.

Its subcellular location is the cell inner membrane. Functionally, part of a membrane-bound complex that couples electron transfer with translocation of ions across the membrane. The chain is Ion-translocating oxidoreductase complex subunit D from Shewanella piezotolerans (strain WP3 / JCM 13877).